The following is a 741-amino-acid chain: HSP-interacting protein (741 aa).

TPR repeat units follow at residues 26–59 (SRELKEEGTRLFNRRDFEGAAFKYDKAVQLLPAG), 65–100 (AHLRASIAHCYMRMSPAEFHHAIHECNLALEAVPRY), and 102–134 (RALLRRAACFEALGRPDLAWGDIRTVLRWEPGN). The tract at residues 168 to 270 (ASAKGEERKK…GESKQQKHSA (103 aa)) is disordered. A compositionally biased stretch (basic and acidic residues) spans 171–184 (KGEERKKSRNKRFD). The segment covering 201–218 (SASTEKQAGPRQTNGTGN) has biased composition (polar residues). A compositionally biased stretch (basic and acidic residues) spans 219–247 (HQDHTEDSESNGLEKLEQSTETGEKDMGK). Residues 248–258 (KRGAHAAGKKP) show a composition bias toward basic residues. Residues 285 to 364 (MKDVKLVFGE…VPIRFYVVEV (80 aa)) enclose the PB1 domain. TPR repeat units lie at residues 496–530 (EFILEKVNVSYDWACTEYAKAGAMFEEAVKTKSDF), 532–557 (EGLIALGQQKFEQAKLSWYYALACKI), 558–591 (NMETEVLELFNHAEDNMEKGMDMWERMETLRLKG), and 628–663 (SHINILWGTILYERSVVEFNLGLPSWEESLTVAMEK).

Interacts (via C-terminus) with O1. Interacts (via C-terminus) with OP10 (via N-terminus).

Functionally, acts as a co-chaperone for HSP90 and is required for proper folding of the myosin motor domain. The polypeptide is HSP-interacting protein (Zea mays (Maize)).